The following is a 308-amino-acid chain: MATYLDFEQKIKNLQDDIESAIISGDNDAISILEKELEKEVSSVYSNISDYQKLQLARHPDRPYAMDYIESILKNPYEINGDRHFKDDKAIVCFLGKIGEQTTMIIGEEKGRGTKNKLARNFGMPSPEGYRKALRAAKLAEKFHIPILMLVDTQGAYPGLGAEERGQSEAIARNLQEFAKLKTPTIAVVIGEGGSGGALAIAVADKLAMMQYSIFSVISPEGCAAILWNDPSKIESATKALKITPIELKKCGLIDDVINEPLIGAHRDKESAAKAIESYFLKAFEEISQDDNYLNKRYQKLMNYGAFS.

One can recognise a CoA carboxyltransferase C-terminal domain in the interval 36–286 (ELEKEVSSVY…ESYFLKAFEE (251 aa)).

The protein belongs to the AccA family. As to quaternary structure, acetyl-CoA carboxylase is a heterohexamer composed of biotin carboxyl carrier protein (AccB), biotin carboxylase (AccC) and two subunits each of ACCase subunit alpha (AccA) and ACCase subunit beta (AccD).

The protein resides in the cytoplasm. It carries out the reaction N(6)-carboxybiotinyl-L-lysyl-[protein] + acetyl-CoA = N(6)-biotinyl-L-lysyl-[protein] + malonyl-CoA. Its pathway is lipid metabolism; malonyl-CoA biosynthesis; malonyl-CoA from acetyl-CoA: step 1/1. Component of the acetyl coenzyme A carboxylase (ACC) complex. First, biotin carboxylase catalyzes the carboxylation of biotin on its carrier protein (BCCP) and then the CO(2) group is transferred by the carboxyltransferase to acetyl-CoA to form malonyl-CoA. The protein is Acetyl-coenzyme A carboxylase carboxyl transferase subunit alpha of Helicobacter hepaticus (strain ATCC 51449 / 3B1).